Consider the following 1781-residue polypeptide: Atrochrysone carboxylic acid synthase (1781 aa).

Positions 15–253 (TRDLFRRLHV…KHVALPVYAG (239 aa)) are N-terminal acylcarrier protein transacylase domain (SAT). The Ketosynthase family 3 (KS3) domain occupies 390-823 (QSKIAIVGMA…GGNTSVVVEE (434 aa)). Active-site for beta-ketoacyl synthase activity residues include cysteine 563, histidine 698, and histidine 741. Residues 925–1244 (FAFTGQGASH…SLGLLHCAGL (320 aa)) are malonyl-CoA:ACP transacylase (MAT) domain. The interval 1312-1631 (TSTVQQIIEE…RVLLNRFFSA (320 aa)) is product template (PT) domain. The segment at 1316–1451 (QQIIEETFSD…ADIVYGLPTD (136 aa)) is N-terminal hotdog fold. The PKS/mFAS DH domain maps to 1316 to 1626 (QQIIEETFSD…FRRYPRVLLN (311 aa)). Residue histidine 1348 is the Proton acceptor; for dehydratase activity of the active site. Positions 1478–1626 (IANRLSHNMA…FRRYPRVLLN (149 aa)) are C-terminal hotdog fold. Aspartate 1537 functions as the Proton donor; for dehydratase activity in the catalytic mechanism. The segment at 1633 to 1653 (DSDTSKHTSATDVSPPKKVVQ) is disordered. The region spanning 1703–1780 (VDSDSTASKA…DLKAWLMEYY (78 aa)) is the Carrier domain. O-(pantetheine 4'-phosphoryl)serine is present on serine 1740.

It carries out the reaction holo-[ACP] + 8 malonyl-CoA + 8 H(+) = atrochrysone carboxyl-[ACP] + 8 CO2 + 8 CoA + 2 H2O. The protein operates within secondary metabolite biosynthesis. Its function is as follows. Atrochrysone carboxylic acid synthase; part of the gene cluster that mediates the biosynthesis of the dimeric xanthones cryptosporioptides. The pathway begins with the synthesis of atrochrysone thioester by the polyketide synthase dmx-nrPKS. The atrochrysone carboxyl ACP thioesterase dmxR1 then breaks the thioester bond and releases the atrochrysone carboxylic acid from dmx-nrPKS. Atrochrysone carboxylic acid is decarboxylated by the decarboxylase dmxR15, and oxidized by the anthrone oxygenase dmxR16 to yield emodin. Emodin is then reduced to emodin hydroquinone by the oxidoreductase dmxR7. A-ring reduction by the short chain dehydrogenase dmxR18, dehydration by the scytalone dehydratase-like protein dmxR17 and probable spontaneous re-oxidation, results in overall deoxygenation to chrysophanol. Baeyer-Villiger oxidation by the Baeyer-Villiger monooxygenase (BVMO) dmxR6 then yields monodictylactone in equilibrium with monodictyphenone. In the case of the cryptosporioptides biosynthesis, monodictylactone is reduced at C-12 to an alcohol (by the short chain dehydrogenases dmxR12 or dmxR8) and hydroxylated at C-5 by dmxR9, yielding the electron-rich aromatic which could eliminate H(2)O to form the ortho-quinonemethide, followed by tautomerisation to paraquinone and complete the formal reduction to produce the 10-methylgroup. Conjugate addition of C-4a-OH to the resulting paraquinone by the monooxygenase dmxR10 then gives cyclohexadienone, which is then reduced at C-5 by the short chain dehydrogenase dmxR3 to give the dihydroxanthone. The 6,7-epoxide in the cryptosporioptides could be introduced by the cytochrome P450 monooxygenase dmxL3. The highly reducing PKS dmxL2 manufactures butyrate, which is further carboxylated by dmxL1 to form ethylmalonate. It is not yet clear whether the carboxylation occurs while the butyrate is attached to the ACP of dmxL2, but this unusual fungal metabolite could then be esterified to O-5 by the O-acetyltransferase dmxR13. Finally, dimerization performed by dmxR5 gives the observed dimers cryptosporioptides A, B and C as the final products of the pathway. This Cryptosporiopsis sp. (strain 8999) protein is Atrochrysone carboxylic acid synthase.